Here is a 394-residue protein sequence, read N- to C-terminus: Stearoyl-[acyl-carrier-protein] 9-desaturase 1, chloroplastic (394 aa).

The transit peptide at 1–37 (MVMAMDRIALFSSSSSVYHHGSSHSHGSKSSRVFTIR) directs the protein to the chloroplast. Positions 135, 173, 176, 226, 259, and 262 each coordinate Fe cation.

This sequence belongs to the fatty acid desaturase type 2 family. Homodimer. It depends on Fe(2+) as a cofactor. Ubiquitously expressed.

Its subcellular location is the plastid. The protein localises to the chloroplast. It catalyses the reaction octadecanoyl-[ACP] + 2 reduced [2Fe-2S]-[ferredoxin] + O2 + 2 H(+) = (9Z)-octadecenoyl-[ACP] + 2 oxidized [2Fe-2S]-[ferredoxin] + 2 H2O. The protein operates within lipid metabolism; fatty acid metabolism. Functionally, converts stearoyl-ACP to oleoyl-ACP by introduction of a cis double bond between carbons 9 and 10 of the acyl chain. This Arabidopsis thaliana (Mouse-ear cress) protein is Stearoyl-[acyl-carrier-protein] 9-desaturase 1, chloroplastic (S-ACP-DES1).